A 243-amino-acid polypeptide reads, in one-letter code: tRNA (guanine-N(1)-)-methyltransferase (243 aa).

Residues Gly113 and 133-138 contribute to the S-adenosyl-L-methionine site; that span reads IGDFVL.

Belongs to the RNA methyltransferase TrmD family. As to quaternary structure, homodimer.

Its subcellular location is the cytoplasm. The catalysed reaction is guanosine(37) in tRNA + S-adenosyl-L-methionine = N(1)-methylguanosine(37) in tRNA + S-adenosyl-L-homocysteine + H(+). Specifically methylates guanosine-37 in various tRNAs. This chain is tRNA (guanine-N(1)-)-methyltransferase, found in Bacillus licheniformis (strain ATCC 14580 / DSM 13 / JCM 2505 / CCUG 7422 / NBRC 12200 / NCIMB 9375 / NCTC 10341 / NRRL NRS-1264 / Gibson 46).